We begin with the raw amino-acid sequence, 500 residues long: Citrate lyase alpha chain (500 aa).

In terms of assembly, oligomer with a subunit composition of (alpha,beta,gamma)6.

It localises to the cytoplasm. The enzyme catalyses citrate = oxaloacetate + acetate. The catalysed reaction is citrate + acetyl-CoA = (3S)-citryl-CoA + acetate. Its function is as follows. Represents a citrate:acetyl-ACP transferase. This is Citrate lyase alpha chain (citF) from Haemophilus influenzae (strain ATCC 51907 / DSM 11121 / KW20 / Rd).